Consider the following 631-residue polypeptide: FAST kinase domain-containing protein 4 (631 aa).

Residues 1–107 (MAAHLVKRCT…NQAAMVLIRL (107 aa)) constitute a mitochondrion transit peptide. Residue Ser-553 is modified to Phosphoserine. Positions 561–619 (LAFLRWEFPNFNSRSKDLLGRFVLARRHIVAAGFLIVDVPFYEWLELKSEWQKGAYLKD) constitute an RAP domain.

It belongs to the FAST kinase family. As to expression, ubiquitously expressed. Expression detected in spleen, thymus, testis, ovary, colon, heart, smooth muscle, kidney, brain, lung, liver and white adipose tissue with highest expression in smooth muscle.

The protein localises to the mitochondrion matrix. Plays a role in processing of mitochondrial RNA precursors and in stabilization of a subset of mature mitochondrial RNA species, such as MT-CO1, MT-CO2, MT-CYB, MT-CO3, MT-ND3, MT-ND5 and MT-ATP8/6. May play a role in cell cycle progression. The polypeptide is FAST kinase domain-containing protein 4 (Homo sapiens (Human)).